A 150-amino-acid chain; its full sequence is Large ribosomal subunit protein bL9 (150 aa).

The protein belongs to the bacterial ribosomal protein bL9 family.

In terms of biological role, binds to the 23S rRNA. This is Large ribosomal subunit protein bL9 from Burkholderia thailandensis (strain ATCC 700388 / DSM 13276 / CCUG 48851 / CIP 106301 / E264).